Consider the following 325-residue polypeptide: Polyamine aminopropyltransferase (325 aa).

Residues serine 11 to aspartate 248 enclose the PABS domain. Glutamine 44 contacts S-methyl-5'-thioadenosine. The spermidine site is built by histidine 75 and aspartate 99. Residues glutamate 119 and aspartate 151–glycine 152 contribute to the S-methyl-5'-thioadenosine site. Aspartate 169 functions as the Proton acceptor in the catalytic mechanism. S-methyl-5'-thioadenosine is bound at residue proline 176.

The protein belongs to the spermidine/spermine synthase family. Homodimer or homotetramer.

The protein localises to the cytoplasm. The catalysed reaction is S-adenosyl 3-(methylsulfanyl)propylamine + putrescine = S-methyl-5'-thioadenosine + spermidine + H(+). It functions in the pathway amine and polyamine biosynthesis; spermidine biosynthesis; spermidine from putrescine: step 1/1. Catalyzes the irreversible transfer of a propylamine group from the amino donor S-adenosylmethioninamine (decarboxy-AdoMet) to putrescine (1,4-diaminobutane) to yield spermidine. In Nitrosomonas europaea (strain ATCC 19718 / CIP 103999 / KCTC 2705 / NBRC 14298), this protein is Polyamine aminopropyltransferase.